We begin with the raw amino-acid sequence, 45 residues long: Turripeptide OL11-like (45 aa).

Cystine bridges form between C1-C31, C5-C24, and C13-C45. Positions 1–45 constitute a Kazal-like domain; it reads CMTICTMEYWPVCGSDGKTYPNKCHLTSTACTSQKDITVLHEGKC.

Belongs to the conopeptide P-like superfamily. As to expression, expressed by the venom duct.

Its subcellular location is the secreted. In terms of biological role, acts as a neurotoxin by inhibiting an ion channel. May also act as a serine protease inhibitor, since it possess the kazal serine protease inhibitor signature. The polypeptide is Turripeptide OL11-like (Lophiotoma albina (Sea snail)).